Consider the following 148-residue polypeptide: Transcriptional regulator MraZ (148 aa).

2 SpoVT-AbrB domains span residues 5–53 (ETAI…AEKE) and 82–125 (SAVL…SEQA).

This sequence belongs to the MraZ family. In terms of assembly, forms oligomers.

It is found in the cytoplasm. The protein resides in the nucleoid. The protein is Transcriptional regulator MraZ of Xanthomonas axonopodis pv. citri (strain 306).